Here is a 346-residue protein sequence, read N- to C-terminus: DnaJ protein ERDJ3B (346 aa).

Residues 1–23 (MAIRWSELCIVLFALSYAICVLA) form the signal peptide. The 66-residue stretch at 26–91 (SYYDVLQVPK…EKREIYNKYG (66 aa)) folds into the J domain. An N-linked (GlcNAc...) asparagine glycan is attached at Asn-267.

Interacts with SDF2 and MED37A/BIP1. In terms of processing, N-glycosylated. Expressed in leaves, flower buds and flowers.

The protein localises to the endoplasmic reticulum lumen. Regulates protein folding in the endoplasmic reticulum (ER) lumen. Forms a complex in the ER with SDF2 and MED37A/BIP1 which is required for the proper accumulation and function of the surface-exposed leucine-rich repeat receptor kinases EFR involved in pathogen-associated molecular pattern (PAMP) triggered immunity. In Arabidopsis thaliana (Mouse-ear cress), this protein is DnaJ protein ERDJ3B (ERDJ3B).